The sequence spans 278 residues: Phosphonates import ATP-binding protein PhnC 1 (278 aa).

The ABC transporter domain occupies 5-253; sequence IRVDSLNKTF…FLNELYGAEG (249 aa). 37–44 serves as a coordination point for ATP; sequence GASGSGKS.

The protein belongs to the ABC transporter superfamily. Phosphonates importer (TC 3.A.1.9.1) family. The complex is composed of two ATP-binding proteins (PhnC), two transmembrane proteins (PhnE) and a solute-binding protein (PhnD).

Its subcellular location is the cell inner membrane. The enzyme catalyses phosphonate(out) + ATP + H2O = phosphonate(in) + ADP + phosphate + H(+). Part of the ABC transporter complex PhnCDE involved in phosphonates import. Responsible for energy coupling to the transport system. In Pseudomonas aeruginosa (strain UCBPP-PA14), this protein is Phosphonates import ATP-binding protein PhnC 1.